We begin with the raw amino-acid sequence, 241 residues long: Ribonuclease PH (241 aa).

Phosphate-binding positions include R89 and 127-129 (GTR).

Belongs to the RNase PH family. As to quaternary structure, homohexameric ring arranged as a trimer of dimers.

The catalysed reaction is tRNA(n+1) + phosphate = tRNA(n) + a ribonucleoside 5'-diphosphate. In terms of biological role, phosphorolytic 3'-5' exoribonuclease that plays an important role in tRNA 3'-end maturation. Removes nucleotide residues following the 3'-CCA terminus of tRNAs; can also add nucleotides to the ends of RNA molecules by using nucleoside diphosphates as substrates, but this may not be physiologically important. Probably plays a role in initiation of 16S rRNA degradation (leading to ribosome degradation) during starvation. This Xanthomonas campestris pv. campestris (strain 8004) protein is Ribonuclease PH.